Consider the following 398-residue polypeptide: Elongation factor Tu (398 aa).

Residues 10–207 (KPHVNIGTIG…TVDEYIPEPE (198 aa)) enclose the tr-type G domain. Positions 19-26 (GHVDHGKT) are G1. GTP is bound at residue 19–26 (GHVDHGKT). T26 is a binding site for Mg(2+). A G2 region spans residues 63–67 (GITIN). The interval 84–87 (DAPG) is G3. Residues 84–88 (DAPGH) and 139–142 (NKVD) contribute to the GTP site. The interval 139–142 (NKVD) is G4. A G5 region spans residues 177–179 (SAL).

Belongs to the TRAFAC class translation factor GTPase superfamily. Classic translation factor GTPase family. EF-Tu/EF-1A subfamily. As to quaternary structure, monomer.

The protein localises to the cytoplasm. It carries out the reaction GTP + H2O = GDP + phosphate + H(+). Its function is as follows. GTP hydrolase that promotes the GTP-dependent binding of aminoacyl-tRNA to the A-site of ribosomes during protein biosynthesis. The protein is Elongation factor Tu of Streptococcus pneumoniae serotype 4 (strain ATCC BAA-334 / TIGR4).